We begin with the raw amino-acid sequence, 370 residues long: tRNA-specific 2-thiouridylase MnmA (370 aa).

ATP is bound by residues 7–14 (GISGGVDS) and methionine 33. The interaction with target base in tRNA stretch occupies residues 104 to 106 (NPD). The Nucleophile role is filled by cysteine 109. A disulfide bridge links cysteine 109 with cysteine 208. Glycine 134 contacts ATP. The tract at residues 158–160 (KDQ) is interaction with tRNA. Cysteine 208 (cysteine persulfide intermediate) is an active-site residue.

It belongs to the MnmA/TRMU family.

The protein localises to the cytoplasm. The enzyme catalyses S-sulfanyl-L-cysteinyl-[protein] + uridine(34) in tRNA + AH2 + ATP = 2-thiouridine(34) in tRNA + L-cysteinyl-[protein] + A + AMP + diphosphate + H(+). Functionally, catalyzes the 2-thiolation of uridine at the wobble position (U34) of tRNA, leading to the formation of s(2)U34. The chain is tRNA-specific 2-thiouridylase MnmA from Malacoplasma penetrans (strain HF-2) (Mycoplasma penetrans).